The following is a 165-amino-acid chain: Small ribosomal subunit protein uS5 (165 aa).

In terms of domain architecture, S5 DRBM spans 13–76 (LEENVVSINR…EDAKRHLIKV (64 aa)).

It belongs to the universal ribosomal protein uS5 family. Part of the 30S ribosomal subunit. Contacts proteins S4 and S8.

Functionally, with S4 and S12 plays an important role in translational accuracy. Its function is as follows. Located at the back of the 30S subunit body where it stabilizes the conformation of the head with respect to the body. This Oenococcus oeni (strain ATCC BAA-331 / PSU-1) protein is Small ribosomal subunit protein uS5.